The primary structure comprises 218 residues: MKFFIDTANLDQIREAHDLGVLDGVTTNPSLMAKEGIKGVENQRRHYVEICNIVQGDVSAEVIATDYEGMVREGKELAALNPHIVVKVPCIADGIKAIKHFSGQGIRTNCTLVFSTGQALLAAKAGATYVSPFVGRLDDICEDGVGLVADIVRMYRFYNYPTQVLAASIRSSKHIMECVEAGADVATCPLSAIKGLLNHPLTDAGLKKFLEDYKKVNE.

Lys87 functions as the Schiff-base intermediate with substrate in the catalytic mechanism.

This sequence belongs to the transaldolase family. Type 3B subfamily.

The protein resides in the cytoplasm. It catalyses the reaction D-sedoheptulose 7-phosphate + D-glyceraldehyde 3-phosphate = D-erythrose 4-phosphate + beta-D-fructose 6-phosphate. It participates in carbohydrate degradation; pentose phosphate pathway; D-glyceraldehyde 3-phosphate and beta-D-fructose 6-phosphate from D-ribose 5-phosphate and D-xylulose 5-phosphate (non-oxidative stage): step 2/3. In terms of biological role, transaldolase is important for the balance of metabolites in the pentose-phosphate pathway. The protein is Probable transaldolase of Bacteroides fragilis (strain ATCC 25285 / DSM 2151 / CCUG 4856 / JCM 11019 / LMG 10263 / NCTC 9343 / Onslow / VPI 2553 / EN-2).